Consider the following 294-residue polypeptide: Acetylglutamate kinase (294 aa).

Substrate is bound by residues 69 to 70 (GG), Arg91, and Asn190.

It belongs to the acetylglutamate kinase family. ArgB subfamily.

Its subcellular location is the cytoplasm. It catalyses the reaction N-acetyl-L-glutamate + ATP = N-acetyl-L-glutamyl 5-phosphate + ADP. Its pathway is amino-acid biosynthesis; L-arginine biosynthesis; N(2)-acetyl-L-ornithine from L-glutamate: step 2/4. In terms of biological role, catalyzes the ATP-dependent phosphorylation of N-acetyl-L-glutamate. This Mycobacterium tuberculosis (strain CDC 1551 / Oshkosh) protein is Acetylglutamate kinase.